A 489-amino-acid chain; its full sequence is Monocarboxylate transporter 2 (489 aa).

Residues 1–21 lie on the Cytoplasmic side of the membrane; it reads MPSESSVKATAAPPPFPLPPD. The chain crosses the membrane as a helical span at residues 22–42; that stretch reads GGWGWVVVCASFISIGFSYAF. The Extracellular segment spans residues 43-65; the sequence is PKAVTVFFNDIKDIFKTTSSQIA. The helical transmembrane segment at 66 to 86 threads the bilayer; it reads WISSIMLAVMYAGGPISSVLV. Residues 87 to 95 are Cytoplasmic-facing; the sequence is NNYGSRPVV. The helical transmembrane segment at 96–116 threads the bilayer; that stretch reads IVGGLLCCTGMILASFSSSVI. Over 117-121 the chain is Extracellular; sequence ELYLT. A helical membrane pass occupies residues 122 to 142; the sequence is VGFIGGLGLAFNLQPALTIIG. Residues 143–154 lie on the Cytoplasmic side of the membrane; that stretch reads KYFYRKRPLANG. A helical membrane pass occupies residues 155–175; it reads FAMAGSPVFLSTLAPFNQFLF. Topologically, residues 176–179 are extracellular; it reads NSYG. The helical transmembrane segment at 180-200 threads the bilayer; that stretch reads WKGSFLILGAIFLHSCVAGCL. Residues 201 to 250 lie on the Cytoplasmic side of the membrane; it reads MRPVGPSPRAAKSKSKVGSRQDSSTKRLSKVSTAEKINRFLDFGLFTHRG. A disordered region spans residues 206–227; the sequence is PSPRAAKSKSKVGSRQDSSTKR. Residues 251–271 form a helical membrane-spanning segment; that stretch reads FLIYLSGNVVLFLGMFAPIIF. Residues 272 to 286 lie on the Extracellular side of the membrane; the sequence is LAPYAKDKGVDDYNS. The chain crosses the membrane as a helical span at residues 287–307; that stretch reads AFLLSVMAFTDMFARPSVGLI. Residues 308-316 are Cytoplasmic-facing; it reads ANTSLIRPR. Residues 317-337 traverse the membrane as a helical segment; sequence IQYLFSVAIMFTGICHLLCPL. Residues 338–342 lie on the Extracellular side of the membrane; that stretch reads AHSYT. The chain crosses the membrane as a helical span at residues 343 to 363; that stretch reads ALVVYVIFFGIGFGSISSLLF. At 364–377 the chain is on the cytoplasmic side; sequence ECLMDQVGASRFSS. The chain crosses the membrane as a helical span at residues 378-398; that stretch reads AVGLVTIVECCPVLFGPPLAG. Residues 399–410 lie on the Extracellular side of the membrane; sequence KLLDITGQYKYL. A helical transmembrane segment spans residues 411 to 431; it reads YIASGIVVLSSGIYLLICNAI. At 432–489 the chain is on the cytoplasmic side; the sequence is NYRLLEKERKREKARRKKSASQASKEMEALSRSKQDDVTVKVSNTHNPPSDRDKESSI. Residues 441-489 form a disordered region; sequence KREKARRKKSASQASKEMEALSRSKQDDVTVKVSNTHNPPSDRDKESSI. 2 stretches are compositionally biased toward basic and acidic residues: residues 456-470 and 480-489; these read KEME…DDVT and PSDRDKESSI.

This sequence belongs to the major facilitator superfamily. Monocarboxylate porter (TC 2.A.1.13) family. Homodimer. Interacts with GRID2IP. Interacts with EMB; interaction mediates SLC16A7 targeting to the plasma membrane. Interacts with isoform 2 of BSG. In terms of tissue distribution, detected in brain and kidney (at protein level).

It is found in the cell membrane. It localises to the basolateral cell membrane. Its subcellular location is the cytoplasm. The catalysed reaction is 3-methyl-2-oxobutanoate(out) + H(+)(out) = 3-methyl-2-oxobutanoate(in) + H(+)(in). It catalyses the reaction (S)-lactate(in) + H(+)(in) = (S)-lactate(out) + H(+)(out). It carries out the reaction acetoacetate(out) + H(+)(out) = acetoacetate(in) + H(+)(in). The enzyme catalyses (R)-3-hydroxybutanoate(out) + H(+)(out) = (R)-3-hydroxybutanoate(in) + H(+)(in). The catalysed reaction is 4-methyl-2-oxopentanoate(out) + H(+)(out) = 4-methyl-2-oxopentanoate(in) + H(+)(in). It catalyses the reaction pyruvate(out) + H(+)(out) = pyruvate(in) + H(+)(in). It carries out the reaction (S)-3-hydroxybutanoate(out) + H(+)(out) = (S)-3-hydroxybutanoate(in) + H(+)(in). Its activity is regulated as follows. Transport activity exhibits steep dependence on substrate concentration. Substrate concentration sensitivity of SLC16A7 arises from the strong inter-subunit cooperativity of the SLC16A7 dimer during transport. Inhibited by AR-C155858. Functionally, proton-coupled monocarboxylate symporter. Catalyzes the rapid transport across the plasma membrane of monocarboxylates such as L-lactate, pyruvate and ketone bodies, acetoacetate, beta-hydroxybutyrate and acetate. Dimerization is functionally required and both subunits work cooperatively in transporting substrate. This chain is Monocarboxylate transporter 2 (Slc16a7), found in Rattus norvegicus (Rat).